The following is a 171-amino-acid chain: 3-hydroxydecanoyl-[acyl-carrier-protein] dehydratase (171 aa).

The active site involves His70.

The protein belongs to the thioester dehydratase family. FabA subfamily. Homodimer.

The protein localises to the cytoplasm. It catalyses the reaction a (3R)-hydroxyacyl-[ACP] = a (2E)-enoyl-[ACP] + H2O. It carries out the reaction (3R)-hydroxydecanoyl-[ACP] = (2E)-decenoyl-[ACP] + H2O. The enzyme catalyses (2E)-decenoyl-[ACP] = (3Z)-decenoyl-[ACP]. It participates in lipid metabolism; fatty acid biosynthesis. Functionally, necessary for the introduction of cis unsaturation into fatty acids. Catalyzes the dehydration of (3R)-3-hydroxydecanoyl-ACP to E-(2)-decenoyl-ACP and then its isomerization to Z-(3)-decenoyl-ACP. Can catalyze the dehydratase reaction for beta-hydroxyacyl-ACPs with saturated chain lengths up to 16:0, being most active on intermediate chain length. In Pseudomonas fluorescens (strain Pf0-1), this protein is 3-hydroxydecanoyl-[acyl-carrier-protein] dehydratase.